The following is an 86-amino-acid chain: Sec-independent protein translocase protein TatA (86 aa).

Residues 3-23 (IFGVGLPEVTVILILALLIFG) form a helical membrane-spanning segment. The tract at residues 56–86 (MNEEDESPKSIESNQTNEINQEKIDSENSKK) is disordered. The segment covering 65 to 74 (SIESNQTNEI) has biased composition (polar residues). A compositionally biased stretch (basic and acidic residues) spans 75–86 (NQEKIDSENSKK).

The protein belongs to the TatA/E family. In terms of assembly, forms a complex with TatC.

It localises to the cell inner membrane. Functionally, part of the twin-arginine translocation (Tat) system that transports large folded proteins containing a characteristic twin-arginine motif in their signal peptide across membranes. TatA could form the protein-conducting channel of the Tat system. In Prochlorococcus marinus (strain MIT 9215), this protein is Sec-independent protein translocase protein TatA.